Reading from the N-terminus, the 284-residue chain is Tropomyosin (284 aa).

Positions 1–284 (MDAIKKKMLA…DSTFAELAGY (284 aa)) form a coiled coil. The tract at residues 105–131 (RLQSATEKLEEASKAADESERGRKVLE) is disordered.

It belongs to the tropomyosin family. As to quaternary structure, homodimer.

Functionally, tropomyosin, in association with the troponin complex, plays a central role in the calcium dependent regulation of muscle contraction. This is Tropomyosin from Cornu aspersum (Brown garden snail).